The sequence spans 166 residues: HTH-type transcriptional regulator rot (166 aa).

The segment at residues 87–110 is a DNA-binding region (H-T-H motif); that stretch reads LKEMDRFVEVKPYKRTRTYNNLVE.

Belongs to the rot family.

Its function is as follows. Global regulator with both positive and negative effects that mediates modulation of several genes involved in virulence. Also, modulates the expression of genes not previously implicated in pathogenesis. The polypeptide is HTH-type transcriptional regulator rot (rot) (Staphylococcus aureus (strain MRSA252)).